A 213-amino-acid polypeptide reads, in one-letter code: Histone H1.2 (213 aa).

A compositionally biased stretch (low complexity) spans 1-17; the sequence is MSETAPAAPAAAPPAEK. The segment at 1–41 is disordered; sequence MSETAPAAPAAAPPAEKTPVKKKAAKKPAGARRKASGPPVS. Ser-2 is subject to N-acetylserine; partial. Ser-2 bears the Phosphoserine mark. N6-acetyllysine is present on Lys-17. A compositionally biased stretch (basic residues) spans 20 to 35; it reads VKKKAAKKPAGARRKA. N6-(2-hydroxyisobutyryl)lysine occurs at positions 23, 26, and 27. Lys-34 bears the N6-(beta-hydroxybutyryl)lysine; alternate mark. Lys-34 is subject to N6-crotonyllysine; alternate. The residue at position 34 (Lys-34) is an N6-methyllysine; alternate. Residues 36–109 enclose the H15 domain; sequence SGPPVSELIT…GASGSFKLNK (74 aa). Position 46 is an N6-(2-hydroxyisobutyryl)lysine (Lys-46). An N6-(beta-hydroxybutyryl)lysine; alternate modification is found at Lys-52. Lys-52 bears the N6-(2-hydroxyisobutyryl)lysine; alternate mark. Residue Arg-54 is modified to Citrulline. Lys-63 carries the N6-(2-hydroxyisobutyryl)lysine modification. Lys-64 carries the post-translational modification N6-(beta-hydroxybutyryl)lysine; alternate. Lys-64 is subject to N6-crotonyllysine; alternate. Lys-64 carries the N6-(2-hydroxyisobutyryl)lysine; alternate modification. N6-(2-hydroxyisobutyryl)lysine is present on residues Lys-75 and Lys-81. An N6-(beta-hydroxybutyryl)lysine; alternate mark is found at Lys-85 and Lys-90. An N6-crotonyllysine; alternate mark is found at Lys-85, Lys-90, and Lys-97. 3 positions are modified to N6-(2-hydroxyisobutyryl)lysine; alternate: Lys-85, Lys-90, and Lys-97. The disordered stretch occupies residues 95 to 213; the sequence is QTKGTGASGS…KPKKAAPKKK (119 aa). The residue at position 97 (Lys-97) is an N6-succinyllysine; alternate. Residue Ser-104 is modified to Phosphoserine; by PKC. Lys-106 carries the post-translational modification N6-(beta-hydroxybutyryl)lysine. Lys-110, Lys-117, Lys-121, Lys-129, and Lys-136 each carry N6-(2-hydroxyisobutyryl)lysine. Positions 119 to 140 are enriched in basic residues; the sequence is KAKKAGAAKPKKAAGAAKKTKK. Thr-146 bears the Phosphothreonine mark. Lys-148 carries the post-translational modification N6-(2-hydroxyisobutyryl)lysine. A compositionally biased stretch (basic residues) spans 149-160; sequence KTAKKTPKKAKK. An N6-crotonyllysine; alternate mark is found at Lys-159 and Lys-168. An N6-(2-hydroxyisobutyryl)lysine; alternate mark is found at Lys-159 and Lys-168. Basic residues predominate over residues 169–186; that stretch reads KVAKSPKKAKAAKPKKAA. N6-methyllysine; by EHMT1 and EHMT2 is present on Lys-187. An ADP-ribosylserine modification is found at Ser-188. Residues 193-213 show a composition bias toward basic residues; the sequence is VKPKAAKPKVAKPKKAAPKKK.

The protein belongs to the histone H1/H5 family. Post-translationally, H1 histones are progressively phosphorylated during the cell cycle, becoming maximally phosphorylated during late G2 phase and M phase, and being dephosphorylated sharply thereafter. Crotonylation (Kcr) is specifically present in male germ cells and marks testis-specific genes in post-meiotic cells, including X-linked genes that escape sex chromosome inactivation in haploid cells. Crotonylation marks active promoters and enhancers and confers resistance to transcriptional repressors. It is also associated with post-meiotically activated genes on autosomes. In terms of processing, ADP-ribosylated on Ser-188 in response to DNA damage. Post-translationally, citrullination at Arg-54 (H1R54ci) by PADI4 takes place within the DNA-binding site of H1 and results in its displacement from chromatin and global chromatin decondensation, thereby promoting pluripotency and stem cell maintenance.

The protein localises to the nucleus. The protein resides in the chromosome. In terms of biological role, histone H1 protein binds to linker DNA between nucleosomes forming the macromolecular structure known as the chromatin fiber. Histones H1 are necessary for the condensation of nucleosome chains into higher-order structured fibers. Also acts as a regulator of individual gene transcription through chromatin remodeling, nucleosome spacing and DNA methylation. The polypeptide is Histone H1.2 (Bos taurus (Bovine)).